A 78-amino-acid chain; its full sequence is Omega-conotoxin-like Ac6.5 (78 aa).

The first 22 residues, 1 to 22 (MKLTCVVIVAVLLLTACQLLTA), serve as a signal peptide directing secretion. Residues 23–42 (DDSRGTQKHRSLRSTTKVSK) constitute a propeptide that is removed on maturation. Cystine bridges form between Cys-46/Cys-62, Cys-53/Cys-65, and Cys-61/Cys-72. 2 positions are modified to 4-hydroxyproline: Pro-55 and Pro-67.

Belongs to the conotoxin O1 superfamily. In terms of tissue distribution, expressed by the venom duct.

It is found in the secreted. Its function is as follows. Omega-conotoxins act at presynaptic membranes, they bind and block voltage-gated calcium channels (Cav). The sequence is that of Omega-conotoxin-like Ac6.5 from Conus achatinus (Little frog cone).